Here is a 448-residue protein sequence, read N- to C-terminus: DNA repair protein RadA (448 aa).

Residues 10–27 form a C4-type zinc finger; the sequence is CSNCGNTSPKWSGQCFDC. 91 to 98 is an ATP binding site; the sequence is GDPGIGKS. The RadA KNRFG motif motif lies at 250-254; that stretch reads KNRFG. Residues 349-448 are lon-protease-like; sequence EVYLSIAGGL…KDLKLLLGSS (100 aa).

The protein belongs to the RecA family. RadA subfamily.

DNA-dependent ATPase involved in processing of recombination intermediates, plays a role in repairing DNA breaks. Stimulates the branch migration of RecA-mediated strand transfer reactions, allowing the 3' invading strand to extend heteroduplex DNA faster. Binds ssDNA in the presence of ADP but not other nucleotides, has ATPase activity that is stimulated by ssDNA and various branched DNA structures, but inhibited by SSB. Does not have RecA's homology-searching function. The protein is DNA repair protein RadA of Rickettsia bellii (strain RML369-C).